We begin with the raw amino-acid sequence, 189 residues long: MEFKATELRLGLPGITEEEEKKIIHGSSVVKNNNKRQLPQTSEESVSISKVTNDEHIVESSSAAPPAKAKIVGWPPIRSYRKNSLHEADVGGIFVKVSMDGAPYLRKIDLRVYGGYSELLKALETMFKLTIGEYSEREGYKGSEYAPTYEDKDGDWMLVGDVPWDMFVTSCKRLRIMKGTEAKGLGCGV.

The EAR-like (transcriptional repression) signature appears at 8–12 (LRLGL). The region spanning 92–179 (GIFVKVSMDG…SCKRLRIMKG (88 aa)) is the PB1 domain.

Belongs to the Aux/IAA family. As to quaternary structure, homodimers and heterodimers. In terms of processing, phosphorylated by phytochrome A in vitro.

The protein localises to the nucleus. Its function is as follows. Aux/IAA proteins are short-lived transcriptional factors that function as repressors of early auxin response genes at low auxin concentrations. Repression is thought to result from the interaction with auxin response factors (ARFs), proteins that bind to the auxin-responsive promoter element (AuxRE). Formation of heterodimers with ARF proteins may alter their ability to modulate early auxin response genes expression. The sequence is that of Auxin-induced protein IAA4 (IAA4/5) from Pisum sativum (Garden pea).